The primary structure comprises 316 residues: Transcription initiation factor IIB (316 aa).

A TFIIB-type zinc finger spans residues 7–38; that stretch reads FRLRCPVCGSTDIVFNEETGEYVCARCGTIVL. 4 residues coordinate Zn(2+): Cys-11, Cys-14, Cys-30, and Cys-33. The tract at residues 51-73 is disordered; it reads FTPEERERRGRTGAPLSPTLHDH. 2 repeat units span residues 124 to 207 and 218 to 299.

The protein belongs to the TFIIB family.

Stabilizes TBP binding to an archaeal box-A promoter. Also responsible for recruiting RNA polymerase II to the pre-initiation complex (DNA-TBP-TFIIB). In Ignicoccus hospitalis (strain KIN4/I / DSM 18386 / JCM 14125), this protein is Transcription initiation factor IIB.